A 305-amino-acid polypeptide reads, in one-letter code: Glutaminase (305 aa).

Residues Ser63, Asn113, Glu158, Asn165, Tyr189, Tyr241, and Val259 each contribute to the substrate site.

This sequence belongs to the glutaminase family. As to quaternary structure, homotetramer.

The catalysed reaction is L-glutamine + H2O = L-glutamate + NH4(+). This Aliarcobacter butzleri (strain RM4018) (Arcobacter butzleri) protein is Glutaminase.